The chain runs to 359 residues: Probable mannitol dehydrogenase (359 aa).

Zn(2+)-binding residues include Cys50, His72, Cys103, Cys106, Cys109, Cys117, and Cys165.

The protein belongs to the zinc-containing alcohol dehydrogenase family. Zn(2+) serves as cofactor.

It catalyses the reaction D-mannitol + NAD(+) = D-mannose + NADH + H(+). In terms of biological role, oxidizes mannitol to mannose. Provides the initial step by which translocated mannitol is committed to central metabolism and, by regulating mannitol pool size, is important in regulating salt tolerance at the cellular level. The chain is Probable mannitol dehydrogenase (CAD1) from Medicago sativa (Alfalfa).